Here is a 273-residue protein sequence, read N- to C-terminus: Putative phosphoenolpyruvate synthase regulatory protein (273 aa).

153–160 (GVSRSGKT) contacts ADP.

Belongs to the pyruvate, phosphate/water dikinase regulatory protein family. PSRP subfamily.

The enzyme catalyses [pyruvate, water dikinase] + ADP = [pyruvate, water dikinase]-phosphate + AMP + H(+). It catalyses the reaction [pyruvate, water dikinase]-phosphate + phosphate + H(+) = [pyruvate, water dikinase] + diphosphate. Its function is as follows. Bifunctional serine/threonine kinase and phosphorylase involved in the regulation of the phosphoenolpyruvate synthase (PEPS) by catalyzing its phosphorylation/dephosphorylation. This is Putative phosphoenolpyruvate synthase regulatory protein from Polaromonas sp. (strain JS666 / ATCC BAA-500).